A 316-amino-acid polypeptide reads, in one-letter code: 4-diphosphocytidyl-2-C-methyl-D-erythritol kinase (316 aa).

Residue K14 is part of the active site. Residue 96–106 (PMGAGLGGGSS) participates in ATP binding. D138 is a catalytic residue.

This sequence belongs to the GHMP kinase family. IspE subfamily.

It catalyses the reaction 4-CDP-2-C-methyl-D-erythritol + ATP = 4-CDP-2-C-methyl-D-erythritol 2-phosphate + ADP + H(+). It participates in isoprenoid biosynthesis; isopentenyl diphosphate biosynthesis via DXP pathway; isopentenyl diphosphate from 1-deoxy-D-xylulose 5-phosphate: step 3/6. Its function is as follows. Catalyzes the phosphorylation of the position 2 hydroxy group of 4-diphosphocytidyl-2C-methyl-D-erythritol. In Solibacter usitatus (strain Ellin6076), this protein is 4-diphosphocytidyl-2-C-methyl-D-erythritol kinase.